The primary structure comprises 912 residues: Ubiquitin carboxyl-terminal hydrolase 3 (912 aa).

A compositionally biased stretch (basic and acidic residues) spans M1–S11. 4 disordered regions span residues M1–Q30, I68–S176, N241–G384, and G396–P417. Composition is skewed to low complexity over residues N82–I95, S102–H140, and T159–S176. Residues A249–P259 show a composition bias toward basic residues. Over residues K260–I310 the composition is skewed to basic and acidic residues. Positions S335–S355 are enriched in low complexity. Polar residues-rich tracts occupy residues R361–G384 and G396–Q406. The 452-residue stretch at R460–R911 folds into the USP domain. C469 acts as the Nucleophile in catalysis. H861 serves as the catalytic Proton acceptor.

It belongs to the peptidase C19 family. Heterotetramer with BRE5; contains two molecules of BRE5 and two molecules of UBP3. Forms a complex composed of CDC48, DOA1, deubiquitinase UBP3 and probably BRE5. Within the complex interacts directly with DOA1 and CDC48 in a BRE5-independent manner.

It carries out the reaction Thiol-dependent hydrolysis of ester, thioester, amide, peptide and isopeptide bonds formed by the C-terminal Gly of ubiquitin (a 76-residue protein attached to proteins as an intracellular targeting signal).. In terms of biological role, has an ATP-independent isopeptidase activity, cleaving at the C-terminus of the ubiquitin moiety in natural or engineered linear fusion proteins, irrespective of their size or the presence of an N-terminal extension to ubiquitin. Plays a role in regulation of silencing by interacting with SIR4. Also, in conjunction with BRE5, cleaves ubiquitin, leading to the subsequent mono-ubiquitination of SEC23. Required for ribophagy, a process which relocalizes ribosomal particles into the vacuole for degradation in response to starvation. The polypeptide is Ubiquitin carboxyl-terminal hydrolase 3 (UBP3) (Saccharomyces cerevisiae (strain ATCC 204508 / S288c) (Baker's yeast)).